Here is a 403-residue protein sequence, read N- to C-terminus: D-galactonate dehydratase family member RspA (403 aa).

Asn-37 and His-122 together coordinate substrate. Residue Tyr-159 is the Proton donor/acceptor of the active site. Asp-211 is a Mg(2+) binding site. His-213 acts as the Proton donor/acceptor in catalysis. The Mg(2+) site is built by Glu-237 and Glu-263. Substrate contacts are provided by Glu-263, Arg-284, His-313, Asp-317, and Glu-340.

Belongs to the mandelate racemase/muconate lactonizing enzyme family. GalD subfamily. Mg(2+) is required as a cofactor.

It carries out the reaction D-mannonate = 2-dehydro-3-deoxy-D-gluconate + H2O. The enzyme catalyses D-gluconate = 2-dehydro-3-deoxy-D-gluconate + H2O. In terms of biological role, has low dehydratase activity with D-mannonate and D-gluconate, suggesting that these are not physiological substrates and that it has no significant role in the in vivo degradation of these compounds. Has no detectable activity with a panel of 70 other acid sugars (in vitro). The chain is D-galactonate dehydratase family member RspA (rspA) from Halomonas elongata (strain ATCC 33173 / DSM 2581 / NBRC 15536 / NCIMB 2198 / 1H9).